A 430-amino-acid chain; its full sequence is Putative glycylpeptide N-tetradecanoyltransferase 2 (430 aa).

Residues 47–50 (HKFW), 181–183 (LCV), and 189–193 (SKGLA) each bind tetradecanoyl-CoA. L430 acts as the Proton acceptor; via carboxylate in catalysis.

It belongs to the NMT family.

The catalysed reaction is N-terminal glycyl-[protein] + tetradecanoyl-CoA = N-tetradecanoylglycyl-[protein] + CoA + H(+). May add a myristoyl group to the N-terminal glycine residue of certain cellular proteins. This chain is Putative glycylpeptide N-tetradecanoyltransferase 2 (NMT2), found in Arabidopsis thaliana (Mouse-ear cress).